A 382-amino-acid chain; its full sequence is Pyrimidine monooxygenase RutA (382 aa).

Residues 68–69, Asn134, Glu143, 159–160, and Ser209 each bind FMN; these read IK and RY.

It belongs to the NtaA/SnaA/DszA monooxygenase family. RutA subfamily.

It catalyses the reaction uracil + FMNH2 + NADH + O2 = (Z)-3-ureidoacrylate + FMN + NAD(+) + H2O + H(+). It carries out the reaction thymine + FMNH2 + NADH + O2 = (Z)-2-methylureidoacrylate + FMN + NAD(+) + H2O + H(+). Functionally, catalyzes the pyrimidine ring opening between N-3 and C-4 by an unusual flavin hydroperoxide-catalyzed mechanism, adding oxygen atoms in the process to yield ureidoacrylate peracid, that immediately reacts with FMN forming ureidoacrylate and FMN-N(5)-oxide. The FMN-N(5)-oxide reacts spontaneously with NADH to produce FMN. Requires the flavin reductase RutF to regenerate FMN in vivo. This chain is Pyrimidine monooxygenase RutA, found in Escherichia coli O55:H7 (strain CB9615 / EPEC).